Consider the following 257-residue polypeptide: NAD-capped RNA hydrolase NudC (257 aa).

Substrate-binding residues include lysine 25 and arginine 69. The Zn(2+) site is built by cysteine 98 and cysteine 101. Glutamate 111 contributes to the substrate binding site. Positions 116 and 119 each coordinate Zn(2+). Tyrosine 124 contacts substrate. In terms of domain architecture, Nudix hydrolase spans 125-248 (PQIAPCIIVA…TVARRLIEDT (124 aa)). Alanine 158, glutamate 174, and glutamate 178 together coordinate a divalent metal cation. Residues 159-180 (GFVEVGETLEQAVAREVMEESG) carry the Nudix box motif. Position 192-199 (192-199 (QPWPFPQS)) interacts with substrate. Position 219 (glutamate 219) interacts with a divalent metal cation. Position 241 (alanine 241) interacts with substrate.

Belongs to the Nudix hydrolase family. NudC subfamily. As to quaternary structure, homodimer. Requires Mg(2+) as cofactor. It depends on Mn(2+) as a cofactor. The cofactor is Zn(2+).

It carries out the reaction a 5'-end NAD(+)-phospho-ribonucleoside in mRNA + H2O = a 5'-end phospho-adenosine-phospho-ribonucleoside in mRNA + beta-nicotinamide D-ribonucleotide + 2 H(+). The enzyme catalyses NAD(+) + H2O = beta-nicotinamide D-ribonucleotide + AMP + 2 H(+). The catalysed reaction is NADH + H2O = reduced beta-nicotinamide D-ribonucleotide + AMP + 2 H(+). Its function is as follows. mRNA decapping enzyme that specifically removes the nicotinamide adenine dinucleotide (NAD) cap from a subset of mRNAs by hydrolyzing the diphosphate linkage to produce nicotinamide mononucleotide (NMN) and 5' monophosphate mRNA. The NAD-cap is present at the 5'-end of some mRNAs and stabilizes RNA against 5'-processing. Has preference for mRNAs with a 5'-end purine. Catalyzes the hydrolysis of a broad range of dinucleotide pyrophosphates. The protein is NAD-capped RNA hydrolase NudC of Shigella dysenteriae serotype 1 (strain Sd197).